Consider the following 425-residue polypeptide: Secernin-2 (425 aa).

Residue Cys12 is part of the active site. Thr52 carries the post-translational modification Phosphothreonine.

This sequence belongs to the peptidase C69 family. Secernin subfamily.

This is Secernin-2 (SCRN2) from Homo sapiens (Human).